The chain runs to 410 residues: Caspase-1 (410 aa).

A CARD domain is found at 1–91 (MADKVLKGKR…HLAETLGLSS (91 aa)). Positions 1-119 (MADKVLKGKR…PLPASVNNMP (119 aa)) are excised as a propeptide. Residues 88–104 (GLSSSPQSGNSQNTTDS) show a composition bias toward polar residues. The tract at residues 88–125 (GLSSSPQSGNSQNTTDSEVAFPPLPASVNNMPGPAEPE) is disordered. Residues His235 and Cys284 contribute to the active site. A propeptide spanning residues 297 to 322 (SPAAPMDSTSQMGSSLSQVGDNLEDD) is cleaved from the precursor.

This sequence belongs to the peptidase C14A family. As to quaternary structure, heterotetramer that consists of two anti-parallel arranged heterodimers, each one formed by a 20 kDa (Caspase-1 subunit p20) and a 10 kDa (Caspase-1 subunit p10) subunit. May be a component of the inflammasome, a protein complex which also includes PYCARD, CARD8 and NLRP2 and whose function would be the activation of pro-inflammatory caspases. Component of the AIM2 PANoptosome complex, a multiprotein complex that drives inflammatory cell death (PANoptosis). Both the p10 and p20 subunits interact with MEFV. Interacts with CARD17P/INCA and CARD18. Interacts with SERPINB1; this interaction regulates CASP1 activity. Heterotetramer that consists of two anti-parallel arranged heterodimers, each one formed by a 20 kDa (Caspase-1 subunit p20) and a 10 kDa (Caspase-1 subunit p10) subunit. Post-translationally, the two subunits are derived from the precursor sequence by an autocatalytic mechanism. Ubiquitinated via 'Lys-11'-linked polyubiquitination. Deubiquitinated by USP8.

It is found in the cytoplasm. It localises to the cell membrane. The enzyme catalyses Strict requirement for an Asp residue at position P1 and has a preferred cleavage sequence of Tyr-Val-Ala-Asp-|-.. Thiol protease involved in a variety of inflammatory processes by proteolytically cleaving other proteins, such as the precursors of the inflammatory cytokines interleukin-1 beta (IL1B) and interleukin 18 (IL18) as well as the pyroptosis inducer Gasdermin-D (GSDMD), into active mature peptides. Plays a key role in cell immunity as an inflammatory response initiator: once activated through formation of an inflammasome complex, it initiates a pro-inflammatory response through the cleavage of the two inflammatory cytokines IL1B and IL18, releasing the mature cytokines which are involved in a variety of inflammatory processes. Cleaves a tetrapeptide after an Asp residue at position P1. Also initiates pyroptosis, a programmed lytic cell death pathway, through cleavage of GSDMD. In contrast to cleavage of interleukin IL1B, recognition and cleavage of GSDMD is not strictly dependent on the consensus cleavage site but depends on an exosite interface on CASP1 that recognizes and binds the Gasdermin-D, C-terminal (GSDMD-CT) part. Cleaves and activates CASP7 in response to bacterial infection, promoting plasma membrane repair. Upon inflammasome activation, during DNA virus infection but not RNA virus challenge, controls antiviral immunity through the cleavage of CGAS, rendering it inactive. In apoptotic cells, cleaves SPHK2 which is released from cells and remains enzymatically active extracellularly. The chain is Caspase-1 (CASP1) from Felis catus (Cat).